Consider the following 747-residue polypeptide: Oxysterol-binding protein-related protein 11 (747 aa).

N-acetylmethionine is present on Met1. The segment at 1–50 (MQGGEPVSTMKVSESEGKLEGQATAVTPNKNSSCGGGISSSSSSRGGSAK) is disordered. Ser15 is modified (phosphoserine). Residue Thr27 is modified to Phosphothreonine. The 98-residue stretch at 58–155 (MENVYGYLMK…WVSRLQICTQ (98 aa)) folds into the PH domain. Residue Tyr62 is modified to Phosphotyrosine. The tract at residues 158–188 (TEAIGKNNPPLKSRSFSLASSSNSPISQRRP) is disordered. The span at 170-184 (SRSFSLASSSNSPIS) shows a compositional bias: low complexity. A phosphoserine mark is found at Ser172, Ser174, Ser177, Ser181, Ser184, and Ser189. Residues 689–713 (EIDKATEHKHTLEERQRTEERHRTE) show a composition bias toward basic and acidic residues. The interval 689–714 (EIDKATEHKHTLEERQRTEERHRTET) is disordered.

The protein belongs to the OSBP family. Heterodimer with OSBPL9. As to expression, present at highest levels in ovary, testis, kidney, liver, stomach, brain, and adipose tissue. Strong expression (at protein level) in epithelial cells of kidney tubules, testicular tubules, caecum, and skin. Present at low levels in subcutaneous and visceral adipose tissue (at protein level).

It localises to the late endosome membrane. It is found in the golgi apparatus. The protein resides in the trans-Golgi network membrane. The catalysed reaction is a 1,2-diacyl-sn-glycero-3-phospho-(1D-myo-inositol 4-phosphate)(out) + a 1,2-diacyl-sn-glycero-3-phospho-L-serine(in) = a 1,2-diacyl-sn-glycero-3-phospho-(1D-myo-inositol 4-phosphate)(in) + a 1,2-diacyl-sn-glycero-3-phospho-L-serine(out). Plays a role in regulating ADIPOQ and FABP4 levels in differentiating adipocytes and is also involved in regulation of adipocyte triglyceride storage. Weakly binds 25-hydroxycholesterol. Interacts with OSBPL9 to function as lipid transfer proteins. Together they form a heterodimer that localizes at the ER-trans-Golgi membrane contact sites, and exchanges phosphatidylserine (1,2-diacyl-sn-glycero-3-phospho-L-serine, PS) for phosphatidylinositol-4-phosphate (1,2-diacyl-sn-glycero-3-phospho-(1D-myo-inositol 4-phosphate), PI(4)P) between the two organelles, a step that is critical for sphingomyelin synthesis in the Golgi complex. In Homo sapiens (Human), this protein is Oxysterol-binding protein-related protein 11 (OSBPL11).